The sequence spans 425 residues: Histidine--tRNA ligase (425 aa).

Belongs to the class-II aminoacyl-tRNA synthetase family. As to quaternary structure, homodimer.

It localises to the cytoplasm. The enzyme catalyses tRNA(His) + L-histidine + ATP = L-histidyl-tRNA(His) + AMP + diphosphate + H(+). This chain is Histidine--tRNA ligase, found in Histophilus somni (strain 2336) (Haemophilus somnus).